A 423-amino-acid polypeptide reads, in one-letter code: Serine hydroxymethyltransferase (423 aa).

121-123 (GHI) lines the (6S)-5,6,7,8-tetrahydrofolate pocket. At Lys227 the chain carries N6-(pyridoxal phosphate)lysine. (6S)-5,6,7,8-tetrahydrofolate is bound at residue Glu242.

The protein belongs to the SHMT family. Homodimer. Pyridoxal 5'-phosphate serves as cofactor.

The protein localises to the cytoplasm. The catalysed reaction is 5,10-methylenetetrahydromethanopterin + glycine + H2O = 5,6,7,8-tetrahydromethanopterin + L-serine. The protein operates within amino-acid biosynthesis; glycine biosynthesis; glycine from L-serine: step 1/1. Functionally, catalyzes the reversible interconversion of serine and glycine with tetrahydromethanopterin (H4MPT) serving as the one-carbon carrier. Cannot use tetrahydrofolate (THF or H4PteGlu) instead of H4MPT as the pteridine substrate. Also probably exhibits a pteridine-independent aldolase activity toward beta-hydroxyamino acids, producing glycine and aldehydes, via a retro-aldol mechanism. This is Serine hydroxymethyltransferase from Methanothermobacter thermautotrophicus (strain ATCC 29096 / DSM 1053 / JCM 10044 / NBRC 100330 / Delta H) (Methanobacterium thermoautotrophicum).